Here is a 444-residue protein sequence, read N- to C-terminus: Acyl-CoA 6-desaturase (444 aa).

The Cytoplasmic portion of the chain corresponds to 1-131; that stretch reads MGKGGNQGEG…DMNLFKTNHV (131 aa). Residues 18–95 enclose the Cytochrome b5 heme-binding domain; the sequence is VPTFSWEEIQ…LKPLLIGELA (78 aa). Residues 132–152 form a helical membrane-spanning segment; the sequence is FFLLLLAHIIALESIAWFTVF. Over 153–157 the chain is Lumenal; it reads YFGNG. The chain crosses the membrane as a helical span at residues 158 to 178; sequence WISTLITAFVLATSQAQAGWL. At 179–264 the chain is on the cytoplasmic side; the sequence is QHDYGHLSVY…KYLPYNHQHE (86 aa). The Histidine box-1 motif lies at 180 to 184; that stretch reads HDYGH. A Histidine box-2 motif is present at residues 217–221; sequence HFQHH. A helical transmembrane segment spans residues 265–285; sequence YFFLIGPPLLIPMYFQYQIIM. The Lumenal portion of the chain corresponds to 286 to 305; sequence TMIVHKNWVDLAWAISYYIR. A helical transmembrane segment spans residues 306–326; it reads FFITYIPFYGILGALLFLNFI. Over 327–444 the chain is Cytoplasmic; the sequence is RFLESHWFVW…KLWLDAYLHK (118 aa). Residues 382-386 carry the Histidine box-3 motif; the sequence is QIEHH.

This sequence belongs to the fatty acid desaturase type 1 family.

Its subcellular location is the endoplasmic reticulum membrane. The catalysed reaction is (9Z,12Z)-octadecadienoyl-CoA + 2 Fe(II)-[cytochrome b5] + O2 + 2 H(+) = (6Z,9Z,12Z)-octadecatrienoyl-CoA + 2 Fe(III)-[cytochrome b5] + 2 H2O. The enzyme catalyses (9Z,12Z,15Z)-octadecatrienoyl-CoA + 2 Fe(II)-[cytochrome b5] + O2 + 2 H(+) = (6Z,9Z,12Z,15Z)-octadecatetraenoyl-CoA + 2 Fe(III)-[cytochrome b5] + 2 H2O. It catalyses the reaction (9Z,12Z,15Z,18Z,21Z)-tetracosapentaenoyl-CoA + 2 Fe(II)-[cytochrome b5] + O2 + 2 H(+) = (6Z,9Z,12Z,15Z,18Z,21Z)-tetracosahexaenoyl-CoA + 2 Fe(III)-[cytochrome b5] + 2 H2O. It carries out the reaction (11E)-octadecenoyl-CoA + 2 Fe(II)-[cytochrome b5] + O2 + 2 H(+) = (6Z,11E)-octadecadienoyl-CoA + 2 Fe(III)-[cytochrome b5] + 2 H2O. The catalysed reaction is (11Z,14Z)-eicosadienoyl-CoA + 2 Fe(II)-[cytochrome b5] + O2 + 2 H(+) = (8Z,11Z,14Z)-eicosatrienoyl-CoA + 2 Fe(III)-[cytochrome b5] + 2 H2O. The enzyme catalyses (11Z,14Z,17Z)-eicosatrienoyl-CoA + 2 Fe(II)-[cytochrome b5] + O2 + 2 H(+) = (8Z,11Z,14Z,17Z)-eicosatetraenoyl-CoA + 2 Fe(III)-[cytochrome b5] + 2 H2O. It participates in lipid metabolism; polyunsaturated fatty acid biosynthesis. Its function is as follows. Involved in the biosynthesis of highly unsaturated fatty acids (HUFA) from the essential polyunsaturated fatty acids (PUFA) linoleic acid (LA) (18:2n-6) and alpha-linolenic acid (ALA) (18:3n-3) precursors, acting as a fatty acyl-coenzyme A (CoA) desaturase that introduces a cis double bond at carbon 6 of the fatty acyl chain. Catalyzes the first and rate limiting step in this pathway which is the desaturation of LA (18:2n-6) and ALA (18:3n-3) into gamma-linoleate (GLA) (18:3n-6) and stearidonate (18:4n-3), respectively. Subsequently, in the biosynthetic pathway of HUFA n-3 series, it desaturates tetracosapentaenoate (24:5n-3) to tetracosahexaenoate (24:6n-3), which is then converted to docosahexaenoate (DHA)(22:6n-3), an important lipid for nervous system function. It can also desaturate (11E)-octadecenoate (trans-vaccenoate) at carbon 6 generating (6Z,11E)-octadecadienoate. In addition to Delta-6 activity, this enzyme exhibits Delta-8 activity with slight biases toward n-3 fatty acyl-CoA substrates. The protein is Acyl-CoA 6-desaturase (FADS2) of Pongo abelii (Sumatran orangutan).